The primary structure comprises 437 residues: MTKQENDIQKRFFNDNLQTVDVAIFDAINGEFKRQQHEIELIASENIVSRAVLEAQGSILTNKYAEGYPRKRFYGGCRFVDVVEDLAIERAKQLFGAAFANVQAHSGSQMNQAVFLALLQPGDTFMGLDLNSGGHLTHGSSVNMSGKWFDVVSYGVRKEDQILDMEEIERLAKEHKPKLIITGGSAYSRLWDWKRFREIADEIGAYLLVDMSHIAGLVAGGVHPSPVPHAHIVTTTTHKSLRGPRGGLILTNDETLARKINSAIFPGLQGGPLMHVIAAKAVAFEEALQPAFKNYSANVVVNAKTLAKTLQSNGFDIVSGGTDNHLLLVDLCSKKVTGKRAELALGRAHITCNKNAIPFDLQAPSVTSGIRLGSPAATTRGLAENEFVQVGHMISEVLDGLQMAKSDEDNNAVEMAVRKKVEDMTNKFPLYSYLPIC.

Residues L130 and 134 to 136 each bind (6S)-5,6,7,8-tetrahydrofolate; that span reads GHL. The residue at position 239 (K239) is an N6-(pyridoxal phosphate)lysine.

This sequence belongs to the SHMT family. In terms of assembly, homodimer. It depends on pyridoxal 5'-phosphate as a cofactor.

It is found in the cytoplasm. It catalyses the reaction (6R)-5,10-methylene-5,6,7,8-tetrahydrofolate + glycine + H2O = (6S)-5,6,7,8-tetrahydrofolate + L-serine. Its pathway is one-carbon metabolism; tetrahydrofolate interconversion. It participates in amino-acid biosynthesis; glycine biosynthesis; glycine from L-serine: step 1/1. In terms of biological role, catalyzes the reversible interconversion of serine and glycine with tetrahydrofolate (THF) serving as the one-carbon carrier. This reaction serves as the major source of one-carbon groups required for the biosynthesis of purines, thymidylate, methionine, and other important biomolecules. Also exhibits THF-independent aldolase activity toward beta-hydroxyamino acids, producing glycine and aldehydes, via a retro-aldol mechanism. This is Serine hydroxymethyltransferase from Bartonella quintana (strain Toulouse) (Rochalimaea quintana).